We begin with the raw amino-acid sequence, 82 residues long: Cytochrome b559 subunit alpha (82 aa).

A helical transmembrane segment spans residues 22 to 36 (VIHSITIPALFIAGW). His-24 contacts heme.

Belongs to the PsbE/PsbF family. As to quaternary structure, heterodimer of an alpha subunit and a beta subunit. PSII is composed of 1 copy each of membrane proteins PsbA, PsbB, PsbC, PsbD, PsbE, PsbF, PsbH, PsbI, PsbJ, PsbK, PsbL, PsbM, PsbT, PsbX, PsbY, PsbZ, Psb30/Ycf12, peripheral proteins PsbO, CyanoQ (PsbQ), PsbU, PsbV and a large number of cofactors. It forms dimeric complexes. It depends on heme b as a cofactor.

It localises to the cellular thylakoid membrane. In terms of biological role, this b-type cytochrome is tightly associated with the reaction center of photosystem II (PSII). PSII is a light-driven water:plastoquinone oxidoreductase that uses light energy to abstract electrons from H(2)O, generating O(2) and a proton gradient subsequently used for ATP formation. It consists of a core antenna complex that captures photons, and an electron transfer chain that converts photonic excitation into a charge separation. The protein is Cytochrome b559 subunit alpha of Trichodesmium erythraeum (strain IMS101).